Consider the following 539-residue polypeptide: Acid-sensing ion channel 4-A (539 aa).

Residues 1–68 (MPIEFVCKIK…SGRLGVRQTL (68 aa)) lie on the Cytoplasmic side of the membrane. The chain crosses the membrane as a helical span at residues 69 to 89 (WALAFLVSLALFLYQAAKCAI). Topologically, residues 90-432 (SYLEHPHVTA…EQKKAYDVAG (343 aa)) are extracellular. Intrachain disulfides connect Cys116–Cys200 and Cys178–Cys185. Residues Asn136, Asn165, Asn179, Asn184, Asn206, and Asn241 are each glycosylated (N-linked (GlcNAc...) asparagine). Intrachain disulfides connect Cys294-Cys369, Cys313-Cys365, Cys317-Cys363, Cys326-Cys347, and Cys328-Cys340. A glycan (N-linked (GlcNAc...) asparagine) is linked at Asn370. The helical transmembrane segment at 433–453 (LLGDIGGQMGLFIGASVLTIL) threads the bilayer. The GAS motif; ion selectivity filter motif lies at 446 to 448 (GAS). The Cytoplasmic portion of the chain corresponds to 454–539 (EILDYVYEVI…HHRVSEDFAC (86 aa)). The segment at 474–494 (QRDDKKQTQQQQQASTVATVN) is disordered.

This sequence belongs to the amiloride-sensitive sodium channel (TC 1.A.6) family. ASIC4 subfamily. As to quaternary structure, homotrimer. Heterotrimer; with other ASIC proteins producing functional channels. As to expression, expressed in central nervous system.

It is found in the cell membrane. It catalyses the reaction Na(+)(in) = Na(+)(out). Inhibited by the diuretic drug amiloride. Could form pH-gated trimeric sodium channels and function as a postsynaptic excitatory receptors in the nervous system. The protein is Acid-sensing ion channel 4-A of Danio rerio (Zebrafish).